Here is a 227-residue protein sequence, read N- to C-terminus: NDR1/HIN1-like protein 10 (227 aa).

Residues 42 to 62 (VKVIISLIVILGVAALIFWLI) form a helical membrane-spanning segment. Residues Asn138 and Asn210 are each glycosylated (N-linked (GlcNAc...) asparagine).

In terms of tissue distribution, expressed in senescing leaves.

The protein localises to the cell membrane. Its function is as follows. May play a role in plant immunity. The protein is NDR1/HIN1-like protein 10 of Arabidopsis thaliana (Mouse-ear cress).